Here is a 101-residue protein sequence, read N- to C-terminus: Protein S100-A4 (101 aa).

Position 2 is an N-acetylalanine (Ala-2). N6-acetyllysine is present on Lys-7. EF-hand domains are found at residues 13–48 (VSTF…FLGK) and 50–85 (TDET…IAMM). 2 residues coordinate Ca(2+): Lys-28 and Glu-33. Position 35 is an N6-acetyllysine (Lys-35). The Ca(2+) site is built by Asp-63, Asn-65, Asp-67, Glu-69, and Glu-74.

This sequence belongs to the S-100 family. As to quaternary structure, homodimer. Interacts with PPFIBP1 in a calcium-dependent mode. Interacts with PGLYRP1; this complex acts as a chemoattractant that promotes lymphocyte movement. Interacts with MYH9; this interaction increases cell motility. Interacts with Annexin 2/ANXA2. Interacts with TP53; this interaction promotes TP53 degradation. Interacts with CCR5 and CXCR3. Interacts with FCGR3A; this interaction inhibits PKC-dependent phosphorylation of FCGR3A.

It localises to the secreted. The protein localises to the nucleus. The protein resides in the cytoplasm. Functionally, calcium-binding protein that plays a role in various cellular processes including motility, angiogenesis, cell differentiation, apoptosis, and autophagy. Increases cell motility and invasiveness by interacting with non-muscle myosin heavy chain (NMMHC) IIA/MYH9. Mechanistically, promotes filament depolymerization and increases the amount of soluble myosin-IIA, resulting in the formation of stable protrusions facilitating chemotaxis. Also modulates the pro-apoptotic function of TP53 by binding to its C-terminal transactivation domain within the nucleus and reducing its protein levels. Within the extracellular space, stimulates cytokine production including granulocyte colony-stimulating factor and CCL24 from T-lymphocytes. In addition, stimulates T-lymphocyte chemotaxis by acting as a chemoattractant complex with PGLYRP1 that promotes lymphocyte migration via CCR5 and CXCR3 receptors. This is Protein S100-A4 (S100A4) from Bos taurus (Bovine).